The chain runs to 236 residues: Sugar fermentation stimulation protein homolog (236 aa).

Belongs to the SfsA family.

The protein is Sugar fermentation stimulation protein homolog of Proteus mirabilis (strain HI4320).